A 282-amino-acid polypeptide reads, in one-letter code: MLSRLFKAGEKVLSNLVSKKDIYMASRNQEKSPKVQELYDLCKETFTGKAPSPASMAIQKLCSVLDSVSPADVGLEEVSQDDDRGYGVSGVSRFNRVGRWAQPITFLDIHECDTFTMCIFCFPTSSVIPLHDHPEMAVFSKILYGSLHVKAYDWVEPPCIITQDKGVPGSLPARLAKLVSDKVITPQSEIPALYPKTGGNLHCFTALTPCAVLDILSPPYKESVGRSCSYYMDYPFSTFALENGMKKVDEGKEDEYAWLVQIDTPDDLHMRPGSYTGPTIRV.

Fe cation is bound by residues His-131, His-133, and His-202.

Belongs to the cysteine dioxygenase family. Fe(2+) serves as cofactor.

The protein resides in the nucleus. It is found in the cytoplasm. The catalysed reaction is L-cysteine + O2 = 3-sulfino-L-alanine + H(+). Functionally, catalyzes the oxidation of N-terminal cysteine residues (N-Cys), thus preparing the protein for N-end rule pathway-mediated proteasomal degradation, upstream of the N-end rule enzymes ATE1, ATE2 and PRT6. Controls the preparation of the group VII ethylene response factor (ERF-VII) proteins for degradation via the 26S proteasome N-end rule pathway. Acts as an oxygen sensor that controls the stability of ERF-VII proteins, which are stabilized in flooding-induced hypoxia, and regulate transcriptional adaptation to these adverse conditions. This Arabidopsis thaliana (Mouse-ear cress) protein is Plant cysteine oxidase 3.